The primary structure comprises 458 residues: Bifunctional protein GlmU (458 aa).

Positions 1–230 (MENRYAIILA…FDEAMGVNDR (230 aa)) are pyrophosphorylase. Residues 9–12 (LAAG), K23, Q73, and 78–79 (GT) contribute to the UDP-N-acetyl-alpha-D-glucosamine site. D103 lines the Mg(2+) pocket. G140, E155, N170, and N228 together coordinate UDP-N-acetyl-alpha-D-glucosamine. Mg(2+) is bound at residue N228. The interval 231–251 (VALSTANKIMHRRLNEMHMRN) is linker. The segment at 252–458 (GVTFIDPDTT…YAKKLPYMKD (207 aa)) is N-acetyltransferase. UDP-N-acetyl-alpha-D-glucosamine-binding residues include R333 and K351. The active-site Proton acceptor is the H363. Residues Y366 and N377 each contribute to the UDP-N-acetyl-alpha-D-glucosamine site. Residues 386 to 387 (NY), S405, A423, and R440 contribute to the acetyl-CoA site.

In the N-terminal section; belongs to the N-acetylglucosamine-1-phosphate uridyltransferase family. The protein in the C-terminal section; belongs to the transferase hexapeptide repeat family. As to quaternary structure, homotrimer. Requires Mg(2+) as cofactor.

Its subcellular location is the cytoplasm. The enzyme catalyses alpha-D-glucosamine 1-phosphate + acetyl-CoA = N-acetyl-alpha-D-glucosamine 1-phosphate + CoA + H(+). The catalysed reaction is N-acetyl-alpha-D-glucosamine 1-phosphate + UTP + H(+) = UDP-N-acetyl-alpha-D-glucosamine + diphosphate. It functions in the pathway nucleotide-sugar biosynthesis; UDP-N-acetyl-alpha-D-glucosamine biosynthesis; N-acetyl-alpha-D-glucosamine 1-phosphate from alpha-D-glucosamine 6-phosphate (route II): step 2/2. The protein operates within nucleotide-sugar biosynthesis; UDP-N-acetyl-alpha-D-glucosamine biosynthesis; UDP-N-acetyl-alpha-D-glucosamine from N-acetyl-alpha-D-glucosamine 1-phosphate: step 1/1. Its pathway is bacterial outer membrane biogenesis; LPS lipid A biosynthesis. Functionally, catalyzes the last two sequential reactions in the de novo biosynthetic pathway for UDP-N-acetylglucosamine (UDP-GlcNAc). The C-terminal domain catalyzes the transfer of acetyl group from acetyl coenzyme A to glucosamine-1-phosphate (GlcN-1-P) to produce N-acetylglucosamine-1-phosphate (GlcNAc-1-P), which is converted into UDP-GlcNAc by the transfer of uridine 5-monophosphate (from uridine 5-triphosphate), a reaction catalyzed by the N-terminal domain. In Enterococcus faecalis (strain ATCC 700802 / V583), this protein is Bifunctional protein GlmU.